We begin with the raw amino-acid sequence, 348 residues long: RNA 3'-terminal phosphate cyclase (348 aa).

Residues Gln-107 and 290–294 (HLADQ) contribute to the ATP site. His-316 serves as the catalytic Tele-AMP-histidine intermediate.

This sequence belongs to the RNA 3'-terminal cyclase family. Type 1 subfamily.

Its subcellular location is the cytoplasm. It catalyses the reaction a 3'-end 3'-phospho-ribonucleotide-RNA + ATP = a 3'-end 2',3'-cyclophospho-ribonucleotide-RNA + AMP + diphosphate. Its function is as follows. Catalyzes the conversion of 3'-phosphate to a 2',3'-cyclic phosphodiester at the end of RNA. The mechanism of action of the enzyme occurs in 3 steps: (A) adenylation of the enzyme by ATP; (B) transfer of adenylate to an RNA-N3'P to produce RNA-N3'PP5'A; (C) and attack of the adjacent 2'-hydroxyl on the 3'-phosphorus in the diester linkage to produce the cyclic end product. The biological role of this enzyme is unknown but it is likely to function in some aspects of cellular RNA processing. The protein is RNA 3'-terminal phosphate cyclase (rtcA) of Nostoc sp. (strain PCC 7120 / SAG 25.82 / UTEX 2576).